We begin with the raw amino-acid sequence, 505 residues long: Trans-cinnamate 4-monooxygenase (505 aa).

A helical membrane pass occupies residues 3–23 (LLLLEKTLLGLFIAAITAIAI). (E)-cinnamate is bound by residues 213–218 (RSRLAQ) and A306. C447 is a heme binding site.

It belongs to the cytochrome P450 family. It depends on heme as a cofactor.

The protein resides in the membrane. It carries out the reaction (E)-cinnamate + reduced [NADPH--hemoprotein reductase] + O2 = (E)-4-coumarate + oxidized [NADPH--hemoprotein reductase] + H2O + H(+). The protein operates within phenylpropanoid metabolism; trans-4-coumarate biosynthesis; trans-4-coumarate from trans-cinnamate: step 1/1. Catalyzes the first oxidative step of the phenylpropanoid pathway in higher plants by transforming trans-cinnamate into p-coumarate. The compounds formed by this pathway are essential components for lignification, pollination, and defense against ultraviolet light, predators and pathogens. This chain is Trans-cinnamate 4-monooxygenase (CYP73A14), found in Glycyrrhiza echinata (Licorice).